The following is a 125-amino-acid chain: UPF0538 protein C2C4.04c (125 aa).

This sequence belongs to the UPF0538 family.

In Schizosaccharomyces pombe (strain 972 / ATCC 24843) (Fission yeast), this protein is UPF0538 protein C2C4.04c.